Reading from the N-terminus, the 120-residue chain is Large ribosomal subunit protein uL18 (120 aa).

The protein belongs to the universal ribosomal protein uL18 family. Part of the 50S ribosomal subunit; part of the 5S rRNA/L5/L18/L25 subcomplex. Contacts the 5S and 23S rRNAs.

Functionally, this is one of the proteins that bind and probably mediate the attachment of the 5S RNA into the large ribosomal subunit, where it forms part of the central protuberance. The protein is Large ribosomal subunit protein uL18 of Xanthobacter autotrophicus (strain ATCC BAA-1158 / Py2).